A 949-amino-acid chain; its full sequence is Translation initiation factor IF-2 (949 aa).

Disordered stretches follow at residues 61 to 122, 139 to 159, and 171 to 284; these read IQAN…PIIK, VENTPKAVSHSQIEKAKQKLQ, and LTQS…NKSH. 2 stretches are compositionally biased toward basic and acidic residues: residues 112–122 and 150–159; these read KKKEAPAPIIK and QIEKAKQKLQ. Positions 174–190 are enriched in low complexity; that stretch reads SNTNTTNNANSASNVSN. The span at 191 to 208 shows a compositional bias: basic and acidic residues; it reads AKKEISEVKKQEQEIKRH. Over residues 209–220 the composition is skewed to basic residues; sequence ENIKRRTGFRVI. A compositionally biased stretch (basic and acidic residues) spans 249–264; sequence EDIKKEWQEKDKQETK. The tr-type G domain maps to 448–617; it reads ERPPVVTIMG…LIQADIMELK (170 aa). The tract at residues 457-464 is G1; that stretch reads GHVDHGKT. 457 to 464 contacts GTP; sequence GHVDHGKT. A G2 region spans residues 482–486; sequence GITQH. Positions 503–506 are G3; that stretch reads DTPG. GTP-binding positions include 503-507 and 557-560; these read DTPGH and NKMD. Residues 557-560 form a G4 region; the sequence is NKMD. The segment at 593–595 is G5; sequence SAK.

The protein belongs to the TRAFAC class translation factor GTPase superfamily. Classic translation factor GTPase family. IF-2 subfamily.

The protein resides in the cytoplasm. Functionally, one of the essential components for the initiation of protein synthesis. Protects formylmethionyl-tRNA from spontaneous hydrolysis and promotes its binding to the 30S ribosomal subunits. Also involved in the hydrolysis of GTP during the formation of the 70S ribosomal complex. The protein is Translation initiation factor IF-2 (infB) of Helicobacter pylori (strain J99 / ATCC 700824) (Campylobacter pylori J99).